An 825-amino-acid polypeptide reads, in one-letter code: NT-3 growth factor receptor (825 aa).

Positions 1–31 are cleaved as a signal peptide; it reads MDVSLCPAKCSFWRIFLLGSVWLDYVGSVLA. 2 disulfide bridges follow: Cys-32–Cys-38 and Cys-36–Cys-45. Residues 32 to 429 are Extracellular-facing; that stretch reads CPANCVCSKT…TVTHKPEEDT (398 aa). Asn-68, Asn-72, and Asn-79 each carry an N-linked (GlcNAc...) asparagine glycan. LRR repeat units follow at residues 104–125 and 128–149; these read GLQK…AFAK and HLRY…LFQT. N-linked (GlcNAc...) asparagine glycans are attached at residues Asn-133 and Asn-163. Positions 160-209 constitute an LRRCT domain; sequence NFFNCSCDIRWMQLWQEQGEARLDSQSLYCISADGSQLPLFRMNISQCDL. Cystine bridges form between Cys-164–Cys-189 and Cys-166–Cys-207. N-linked (GlcNAc...) asparagine glycosylation is found at Asn-203, Asn-218, Asn-232, Asn-259, Asn-267, Asn-272, and Asn-294. Ig-like C2-type domains lie at 210 to 300 and 309 to 382; these read PEIS…VALT and SLVE…IAKN. The cysteines at positions 231 and 284 are disulfide-linked. Cys-320 and Cys-362 are oxidised to a cystine. Residues Asn-375 and Asn-388 are each glycosylated (N-linked (GlcNAc...) asparagine). A helical membrane pass occupies residues 430–453; it reads FGVSIAVGLAAFACVLLVVLFIMI. Residues 454–825 are Cytoplasmic-facing; sequence NKYGRRSKFG…ATPIYLDILG (372 aa). Residue Ser-493 is modified to Phosphoserine. The residue at position 516 (Tyr-516) is a Phosphotyrosine. The 288-residue stretch at 538-825 folds into the Protein kinase domain; it reads IVLKRELGEG…ATPIYLDILG (288 aa). Residues 544-552 and Lys-572 contribute to the ATP site; that span reads LGEGAFGKV. Residue Asp-679 is the Proton acceptor of the active site. Phosphotyrosine; by autocatalysis occurs at positions 705, 709, and 710.

Belongs to the protein kinase superfamily. Tyr protein kinase family. Insulin receptor subfamily. As to quaternary structure, exists in a dynamic equilibrium between monomeric (low affinity) and dimeric (high affinity) structures. Binds SH2B2. Interacts with SQSTM1 and KIDINS220. Interacts with PTPRS. Interacts with MAPK8IP3/JIP3. Ligand-mediated auto-phosphorylation. In terms of tissue distribution, isoform 2 expression is restricted to specific areas in adult brain. Isoform 3 transcripts are readily detected early during embryogenesis and are expressed predominantly in adult brain and gonads.

It is found in the membrane. It carries out the reaction L-tyrosyl-[protein] + ATP = O-phospho-L-tyrosyl-[protein] + ADP + H(+). Functionally, receptor tyrosine kinase involved in nervous system and probably heart development. Upon binding of its ligand NTF3/neurotrophin-3, NTRK3 autophosphorylates and activates different signaling pathways, including the phosphatidylinositol 3-kinase/AKT and the MAPK pathways, that control cell survival and differentiation. The sequence is that of NT-3 growth factor receptor (Ntrk3) from Mus musculus (Mouse).